Here is a 776-residue protein sequence, read N- to C-terminus: MSEAVRVPSPATPLVVAAAAPEERKGKESEREKLPPIVSAGAGATAGLDRGAKGQISTFSSFISAVSPKKEAAENRSSPAHLVFPNIKNVRDQPPICLDVRQKQRTSMDASSSEMKAPVLPEPIHPIQPKTVKDFQEDVEKVKSSGDWKAVHDFYLTTFDSFPELNAAFKKDATASFNTIEDSGINAKFVNAVYDTLLNTPQDIQKTVLKGIINSLLREWKGPRTKDDLRAYFVLLQNPQFNNTSTYVIYAHLLRQIATLVEADHHFLVHWFKRLSQKRFKQLVERLLQFISLRLFPAKPEEFPPVTKCSWWIPSAAKVLALLNTANNLVHPPLIPYTDFYNSTLDHIDLMEEYHTWQNFGNSHRFSFCQYPFVISVAAKKIIIQRDSEQQMINIARQSLVDKVSRRQRPDMNMLFLNMKVRRTHLVSDSLDELTRKRADLKKKLKVTFVGEAGLDMGGLTKEWFLLLIRQIFHPDYGMFTYHKDSHCHWFSSFKCDNYSEFRLVGILMGLAVYNSITLDIRFPPCCYKKLLSPPIIPSDQNIPVGICSVTVDDLCQIMPELAHGLSELLSHEGNVEEDFYSTFQVFQEEFGIIKSYNLKPGGDKISVTNQNRKEYVQLYTDFLLNKSIYKQFAAFYYGFHSVCASNALMLLRPEEVEILVCGSPDLDMHALQRSTQYDGYAKTDLTIKYFWDVVLGFPLDLQKKLLHFTTGSDRVPVGGMADLNFKISKNETSTNCLPVAHTCFNQLCLPPYKSKKDLKQKLIIGISNSEGFGLE.

The segment at 1–46 is disordered; that stretch reads MSEAVRVPSPATPLVVAAAAPEERKGKESEREKLPPIVSAGAGATA. A compositionally biased stretch (low complexity) spans 7–20; sequence VPSPATPLVVAAAA. At S9 the chain carries Phosphoserine. Basic and acidic residues predominate over residues 21–34; that stretch reads PEERKGKESEREKL. Residues 437–776 enclose the HECT domain; sequence KRADLKKKLK…ISNSEGFGLE (340 aa). C744 functions as the Glycyl thioester intermediate in the catalytic mechanism.

It carries out the reaction S-ubiquitinyl-[E2 ubiquitin-conjugating enzyme]-L-cysteine + [acceptor protein]-L-lysine = [E2 ubiquitin-conjugating enzyme]-L-cysteine + N(6)-ubiquitinyl-[acceptor protein]-L-lysine.. The protein operates within protein modification; protein ubiquitination. E3 ubiquitin-protein ligase which accepts ubiquitin from an E2 ubiquitin-conjugating enzyme in the form of a thioester and then directly transfers the ubiquitin to targeted substrates. The polypeptide is Probable E3 ubiquitin-protein ligase HECTD2 (HECTD2) (Pongo abelii (Sumatran orangutan)).